A 122-amino-acid chain; its full sequence is Large ribosomal subunit protein uL14 (122 aa).

This sequence belongs to the universal ribosomal protein uL14 family. Part of the 50S ribosomal subunit. Forms a cluster with proteins L3 and L19. In the 70S ribosome, L14 and L19 interact and together make contacts with the 16S rRNA in bridges B5 and B8.

In terms of biological role, binds to 23S rRNA. Forms part of two intersubunit bridges in the 70S ribosome. This Trichlorobacter lovleyi (strain ATCC BAA-1151 / DSM 17278 / SZ) (Geobacter lovleyi) protein is Large ribosomal subunit protein uL14.